A 238-amino-acid polypeptide reads, in one-letter code: tRNA (guanine-N(7)-)-methyltransferase (238 aa).

S-adenosyl-L-methionine is bound by residues glutamate 68, glutamate 93, aspartate 120, and aspartate 143. Residue aspartate 143 is part of the active site. Substrate contacts are provided by residues lysine 147, aspartate 179, and 216–219 (TKFE).

It belongs to the class I-like SAM-binding methyltransferase superfamily. TrmB family.

The enzyme catalyses guanosine(46) in tRNA + S-adenosyl-L-methionine = N(7)-methylguanosine(46) in tRNA + S-adenosyl-L-homocysteine. It participates in tRNA modification; N(7)-methylguanine-tRNA biosynthesis. Catalyzes the formation of N(7)-methylguanine at position 46 (m7G46) in tRNA. The protein is tRNA (guanine-N(7)-)-methyltransferase of Shewanella sp. (strain W3-18-1).